The primary structure comprises 359 residues: MSKQILILAGDGIGPEIVGAAEQVLTKVNEKFELGLTWEHGLLGGSAIDAHGEPYPAVTSEQAKKADAILLGAVGGPKWDTIERSIRPERGLLKIRSELNLFANLRPALLYPQLADASSLKPEIVAGLDILIVRELTGGIYFGQPRGIRELENGEKQGYNTDVYSESEIKRIAKVAFELAALRGSKVCSVDKANVLEVTELWKQTVTELQQAQYPNIQLSHMYVDNAAMQLVRAPKQFDVIVTGNLFGDILSDEAAMLTGSIGMLPSASLDENGKGMYEPCHGSAPDIAGQNVANPLATILSVAMMLRYTFREEAAAKAIEDAVGQVLDQGLRTADIMSEGMQRVGTVEMGQAVVAALA.

76-89 is an NAD(+) binding site; it reads GPKWDTIERSIRPE. Substrate-binding residues include Arg-96, Arg-106, Arg-134, and Asp-225. 3 residues coordinate Mg(2+): Asp-225, Asp-249, and Asp-253. NAD(+) is bound at residue 283–295; it reads GSAPDIAGQNVAN.

This sequence belongs to the isocitrate and isopropylmalate dehydrogenases family. LeuB type 1 subfamily. Homodimer. Requires Mg(2+) as cofactor. The cofactor is Mn(2+).

It localises to the cytoplasm. It catalyses the reaction (2R,3S)-3-isopropylmalate + NAD(+) = 4-methyl-2-oxopentanoate + CO2 + NADH. Its pathway is amino-acid biosynthesis; L-leucine biosynthesis; L-leucine from 3-methyl-2-oxobutanoate: step 3/4. In terms of biological role, catalyzes the oxidation of 3-carboxy-2-hydroxy-4-methylpentanoate (3-isopropylmalate) to 3-carboxy-4-methyl-2-oxopentanoate. The product decarboxylates to 4-methyl-2 oxopentanoate. The chain is 3-isopropylmalate dehydrogenase from Acinetobacter baylyi (strain ATCC 33305 / BD413 / ADP1).